A 130-amino-acid chain; its full sequence is Small ribosomal subunit protein uS11 (130 aa).

The protein belongs to the universal ribosomal protein uS11 family. As to quaternary structure, part of the 30S ribosomal subunit. Interacts with proteins S7 and S18. Binds to IF-3.

Its function is as follows. Located on the platform of the 30S subunit, it bridges several disparate RNA helices of the 16S rRNA. Forms part of the Shine-Dalgarno cleft in the 70S ribosome. The chain is Small ribosomal subunit protein uS11 from Shewanella amazonensis (strain ATCC BAA-1098 / SB2B).